The primary structure comprises 503 residues: Glutamate--tRNA ligase (503 aa).

The short motif at 15-25 (PSPTGYLHVGG) is the 'HIGH' region element. The short motif at 262-266 (KLSKR) is the 'KMSKS' region element. Lys265 is a binding site for ATP.

It belongs to the class-I aminoacyl-tRNA synthetase family. Glutamate--tRNA ligase type 1 subfamily. Monomer.

The protein localises to the cytoplasm. It carries out the reaction tRNA(Glu) + L-glutamate + ATP = L-glutamyl-tRNA(Glu) + AMP + diphosphate. Catalyzes the attachment of glutamate to tRNA(Glu) in a two-step reaction: glutamate is first activated by ATP to form Glu-AMP and then transferred to the acceptor end of tRNA(Glu). The chain is Glutamate--tRNA ligase from Prosthecochloris aestuarii (strain DSM 271 / SK 413).